The following is a 123-amino-acid chain: Large ribosomal subunit protein bL19c (123 aa).

Belongs to the bacterial ribosomal protein bL19 family.

Its subcellular location is the plastid. The protein resides in the chloroplast. The chain is Large ribosomal subunit protein bL19c from Pyropia yezoensis (Susabi-nori).